The following is a 437-amino-acid chain: tRNA(Ile2) 2-agmatinylcytidine synthetase TiaS (437 aa).

This sequence belongs to the TiaS family.

The protein resides in the cytoplasm. It carries out the reaction cytidine(34) in tRNA(Ile2) + agmatine + ATP + H2O = 2-agmatinylcytidine(34) in tRNA(Ile2) + AMP + 2 phosphate + 2 H(+). Functionally, ATP-dependent agmatine transferase that catalyzes the formation of 2-agmatinylcytidine (agm2C) at the wobble position (C34) of tRNA(Ile2), converting the codon specificity from AUG to AUA. This is tRNA(Ile2) 2-agmatinylcytidine synthetase TiaS from Thermoplasma volcanium (strain ATCC 51530 / DSM 4299 / JCM 9571 / NBRC 15438 / GSS1).